The chain runs to 778 residues: MEVNDTSLHKGFGLDINSQRVFGAQAAISRNNYSKVNASINPSPPRSNDNSNKEFSYSKDVNNNGAVEELSLTQLFEVPSQAAFAKQSSQDISDDELIQHDSRKVISSPYSPKQTHTVLKRLYDRQSVISDHEKLLTPQNVSNSSQILSPFTSLLPSTLSTLKDTPLSVSQNEKNLETVGEVLVPETVAQHRTKFYDYTLDEMENETESGQVETTPTRLATSLGSPVLYGRVESTPPAFLPETSEKQYKRKFSFTEPSSEKVDNTETKFSKKTKNINDENFPNPFNVISSYETSASPSTVIDQSSQVSSIFVNKRLRKSVNNQAISRSDSLSLDTPKIDSLFTRASIKPLKPSQSPNSRRSFKNRVLAFFKGYPSFYYPATLVAPVHSAVTSSIMYKVQFDDATMSTVNSNQIKRFFLKKGDVVQSTRLGKIKHTVVKTFRSTNEQLSLIAVDALNNDMVILAHGEIEVTVPISTIYVAPVNIRRFQGRDLSFSTLKDMKFEETSFLPSHDSQRNRSSLKERDSSFVKKNLDSESNQLIFDDCVFAFSGPVHEDAYDRSALETVVQDHGGLVLDTGLRPLFNDPFKSKQKKLRHLKPQKRSKSWNQAFVVSDTFSRKVKYLEALAFNIPCVHPQFIKQCLKMNRVVDFSPYLLASGYSHRLDCTLSQRIEPFDTTDSLYDRLLARKGPLFGKKILFIIPEAKSWQKKIENTEQGQKALAHVYHALALGADVEIRPNVAHLECDLILTMDGNIVDETNCPVVDPEWIVECLISQSDIST.

The interval 35-56 (KVNASINPSPPRSNDNSNKEFS) is disordered. Residue T73 is modified to Phosphothreonine; by ATM. S80 is subject to Phosphoserine; by ATM. Positions 141-245 (VSNSSQILSP…PPAFLPETSE (105 aa)) are interaction with rad4. T187 is modified (phosphothreonine). T215 bears the Phosphothreonine; by cdc2 mark. The residue at position 235 (T235) is a Phosphothreonine. The tudor-like stretch occupies residues 358-493 (SRRSFKNRVL…RRFQGRDLSF (136 aa)). Residues 370-404 (FKGYPSFYYPATLVAPVHSAVTSSIMYKVQFDDAT) form an interaction with dimethylated histone H4 region. The 119-residue stretch at 535-653 (SNQLIFDDCV…RVVDFSPYLL (119 aa)) folds into the BRCT domain.

As to quaternary structure, homodimer. Dimerization is mediated via the BRCT domain. Interacts (via BRCT domain) with rad3. Interacts with rad4 (via BRCT1,2 domains); a single rad4 molecule interacts simultaneously with both Thr-187 phosphorylation sites in a crb2 dimer. Interacts (via Tudor domain) with histone H4K20me2. Interacts (via BRCT dmain) with histone H2AS128ph (gamma-H2A). Interacts with chk1. Interacts with sad1. Phosphorylation of Thr-73 and Ser-80 by rad3/ATM promotes interaction with chk1. Phosphorylation at Thr-187 is dependent on phosphorylation at Thr-215 and Thr-235. Phosphorylation at Thr-215 and Thr-235 may prime the non-canonical Thr-187 site for cdc2/CDK phosphorylation.

It localises to the nucleus. Essential for cell cycle arrest at the G1 and G2 stages following DNA damage by X-, and UV-irradiation, or inactivation of DNA ligase. Plays a role in the response to DNA damage. Interaction with rad4 via its phosphorylation sites in the N-terminus couples the DNA checkpoint apparatus to chromatin via interaction of its C-terminal BRCT domains with epigenetic modifications on histones H4 and H2A, respectively, in the G1/S phase of the cell cycle, and facilitates recruitment of the checkpoint kinase chk1. The protein is DNA repair protein crb2 of Schizosaccharomyces pombe (strain 972 / ATCC 24843) (Fission yeast).